The following is a 414-amino-acid chain: 5-aminolevulinate synthase (414 aa).

3 residues coordinate substrate: R22, S133, and K152. Positions 185, 213, and 241 each coordinate pyridoxal 5'-phosphate. Residue K244 is part of the active site. K244 carries the N6-(pyridoxal phosphate)lysine modification. Residues T273 and T274 each coordinate pyridoxal 5'-phosphate. T359 contributes to the substrate binding site.

Belongs to the class-II pyridoxal-phosphate-dependent aminotransferase family. Homodimer. Requires pyridoxal 5'-phosphate as cofactor.

The catalysed reaction is succinyl-CoA + glycine + H(+) = 5-aminolevulinate + CO2 + CoA. Its pathway is porphyrin-containing compound metabolism; protoporphyrin-IX biosynthesis; 5-aminolevulinate from glycine: step 1/1. The sequence is that of 5-aminolevulinate synthase (hemA) from Rickettsia typhi (strain ATCC VR-144 / Wilmington).